The sequence spans 303 residues: N-acetyl-D-glucosamine kinase (303 aa).

Residues glycine 4 to lysine 11 and glycine 133 to valine 140 each bind ATP. The Zn(2+) site is built by histidine 157, cysteine 177, cysteine 179, and cysteine 184.

It belongs to the ROK (NagC/XylR) family. NagK subfamily.

It carries out the reaction N-acetyl-D-glucosamine + ATP = N-acetyl-D-glucosamine 6-phosphate + ADP + H(+). It participates in cell wall biogenesis; peptidoglycan recycling. In terms of biological role, catalyzes the phosphorylation of N-acetyl-D-glucosamine (GlcNAc) derived from cell-wall degradation, yielding GlcNAc-6-P. The protein is N-acetyl-D-glucosamine kinase of Erwinia tasmaniensis (strain DSM 17950 / CFBP 7177 / CIP 109463 / NCPPB 4357 / Et1/99).